A 433-amino-acid polypeptide reads, in one-letter code: Succinate--CoA ligase [GDP-forming] subunit beta, mitochondrial (433 aa).

The N-terminal 38 residues, 1–38 (IPAAPVAAQARKLLRDLAFRPPLLAARSQVVQLTPRRW), are a transit peptide targeting the mitochondrion. In terms of domain architecture, ATP-grasp spans 47–275 (KKLMSDNGVK…NAEFRQKDIF (229 aa)). Position 58 (Gln-58) interacts with GTP. The residue at position 74 (Lys-74) is an N6-acetyllysine. Lys-79 is subject to N6-succinyllysine. Position 91 to 93 (91 to 93 (GRG)) interacts with GTP. Lys-133 and Lys-140 each carry N6-acetyllysine. Residue Leu-147 participates in GTP binding. Residue Ser-162 is modified to Phosphoserine. Residues Lys-201 and Lys-228 each carry the N6-acetyllysine modification. Mg(2+) is bound by residues Asn-244 and Asp-258. Residues Lys-272 and Lys-292 each carry the N6-acetyllysine modification. Asn-309 is a substrate binding site. Lys-339 bears the N6-succinyllysine mark. Residue Lys-348 is modified to N6-acetyllysine. A substrate-binding site is contributed by 366 to 368 (GIV). Lys-387 and Lys-424 each carry N6-acetyllysine.

This sequence belongs to the succinate/malate CoA ligase beta subunit family. GTP-specific subunit beta subfamily. Heterodimer of an alpha and a beta subunit. The beta subunit determines specificity for GTP. Mg(2+) serves as cofactor.

It localises to the mitochondrion. It carries out the reaction GTP + succinate + CoA = succinyl-CoA + GDP + phosphate. Its pathway is carbohydrate metabolism; tricarboxylic acid cycle; succinate from succinyl-CoA (ligase route): step 1/1. In terms of biological role, GTP-specific succinyl-CoA synthetase functions in the citric acid cycle (TCA), coupling the hydrolysis of succinyl-CoA to the synthesis of GTP and thus represents the only step of substrate-level phosphorylation in the TCA. The beta subunit provides nucleotide specificity of the enzyme and binds the substrate succinate, while the binding sites for coenzyme A and phosphate are found in the alpha subunit. The polypeptide is Succinate--CoA ligase [GDP-forming] subunit beta, mitochondrial (Sus scrofa (Pig)).